The sequence spans 570 residues: Sulfite reductase [NADPH] hemoprotein beta-component (570 aa).

[4Fe-4S] cluster is bound by residues cysteine 434, cysteine 440, cysteine 479, and cysteine 483. Cysteine 483 lines the siroheme pocket.

Belongs to the nitrite and sulfite reductase 4Fe-4S domain family. As to quaternary structure, alpha(8)-beta(8). The alpha component is a flavoprotein, the beta component is a hemoprotein. Requires siroheme as cofactor. [4Fe-4S] cluster is required as a cofactor.

The catalysed reaction is hydrogen sulfide + 3 NADP(+) + 3 H2O = sulfite + 3 NADPH + 4 H(+). The protein operates within sulfur metabolism; hydrogen sulfide biosynthesis; hydrogen sulfide from sulfite (NADPH route): step 1/1. Component of the sulfite reductase complex that catalyzes the 6-electron reduction of sulfite to sulfide. This is one of several activities required for the biosynthesis of L-cysteine from sulfate. This is Sulfite reductase [NADPH] hemoprotein beta-component from Escherichia coli O7:K1 (strain IAI39 / ExPEC).